A 110-amino-acid polypeptide reads, in one-letter code: Large ribosomal subunit protein uL22 (110 aa).

The protein belongs to the universal ribosomal protein uL22 family. As to quaternary structure, part of the 50S ribosomal subunit.

This protein binds specifically to 23S rRNA; its binding is stimulated by other ribosomal proteins, e.g. L4, L17, and L20. It is important during the early stages of 50S assembly. It makes multiple contacts with different domains of the 23S rRNA in the assembled 50S subunit and ribosome. Functionally, the globular domain of the protein is located near the polypeptide exit tunnel on the outside of the subunit, while an extended beta-hairpin is found that lines the wall of the exit tunnel in the center of the 70S ribosome. The protein is Large ribosomal subunit protein uL22 of Actinobacillus pleuropneumoniae serotype 5b (strain L20).